Here is a 457-residue protein sequence, read N- to C-terminus: Argininosuccinate lyase (457 aa).

Belongs to the lyase 1 family. Argininosuccinate lyase subfamily.

The protein localises to the cytoplasm. It carries out the reaction 2-(N(omega)-L-arginino)succinate = fumarate + L-arginine. Its pathway is amino-acid biosynthesis; L-arginine biosynthesis; L-arginine from L-ornithine and carbamoyl phosphate: step 3/3. This chain is Argininosuccinate lyase, found in Haemophilus influenzae (strain PittEE).